The following is a 158-amino-acid chain: SsrA-binding protein (158 aa).

The tract at residues 131–158 (YDKRQTLRERQDKREADRAMSSHRRLGE) is disordered.

Belongs to the SmpB family.

Its subcellular location is the cytoplasm. Required for rescue of stalled ribosomes mediated by trans-translation. Binds to transfer-messenger RNA (tmRNA), required for stable association of tmRNA with ribosomes. tmRNA and SmpB together mimic tRNA shape, replacing the anticodon stem-loop with SmpB. tmRNA is encoded by the ssrA gene; the 2 termini fold to resemble tRNA(Ala) and it encodes a 'tag peptide', a short internal open reading frame. During trans-translation Ala-aminoacylated tmRNA acts like a tRNA, entering the A-site of stalled ribosomes, displacing the stalled mRNA. The ribosome then switches to translate the ORF on the tmRNA; the nascent peptide is terminated with the 'tag peptide' encoded by the tmRNA and targeted for degradation. The ribosome is freed to recommence translation, which seems to be the essential function of trans-translation. The sequence is that of SsrA-binding protein from Clavibacter michiganensis subsp. michiganensis (strain NCPPB 382).